The primary structure comprises 624 residues: MEIQFGNQRCRMVNSGGFLATDGSHLKEMETDDVLVEFLNIEHQLFIRNIRAIVKIADTTVLPSASDKKLLYYVFDETRVRINDTPVIFSKLEEDNANVNEGSKMGVMTVPNTPQKPNLQQQKFEAINANEDQIDYSSNLEQNYNSLIRQGSDQVIPLSRFASEKSALELEKELFSERIPESQSAAEPVLKVENSENDLDEKLVLDGQHVEGDHSSDTEEEVVSEDQKQLNKTDDESTFIESHQIYIQGETKSPSSVSQSLSGDPSLKPAEVFDRKQSAEINSPIEKDVNPQQNISDSSIKNNSIHSDEVNPEVRPDLTPSNENEESKRSAPEIALKEKESTSQDESNREAEEAPISTNYSFPSSSLEDQPDKNVQSSAVENKNKHTNLVTSSFNLTKPMKSFIRRNGLRVQESVTDETDFVILGSPPLRRTHKFLLATSLGIPLVSSQYLTDCIKSGKVLDFRSYKYKDEEAEAKWGFRLDDIHRRTCFNGKRLYITKAIRDSMVGDSIHGLYSILETSGAEIVGDIKRAQEKDTIILAQPDNDQEGRNMSATGLNVYKIELVALSILRDRIDFDEFLIDYDADSPTKVIGKRNVSKASRTGQGRKRSSRSSWNKPSAKEQRT.

3 disordered regions span residues 177–237 (ERIP…DDES), 249–386 (GETK…KNKH), and 591–624 (IGKR…EQRT). Composition is skewed to basic and acidic residues over residues 200–217 (DEKL…HSSD) and 225–235 (EDQKQLNKTDD). Residues 250-263 (ETKSPSSVSQSLSG) are compositionally biased toward polar residues. A phosphoserine mark is found at serine 253 and serine 283. Over residues 294-305 (NISDSSIKNNSI) the composition is skewed to low complexity. Basic and acidic residues-rich tracts occupy residues 306–316 (HSDEVNPEVRP) and 325–352 (EESK…REAE). Residues 356 to 386 (ISTNYSFPSSSLEDQPDKNVQSSAVENKNKH) show a composition bias toward polar residues. The BRCT domain maps to 376–468 (QSSAVENKNK…KVLDFRSYKY (93 aa)).

Homodimer. Interacts (via BRCT domain) with hta1 peptide containing the S/T-Q motif in vitro; this interaction requires phosphorylation of the hta1 peptide at the S/T-Q motif.

It localises to the nucleus. The protein resides in the chromosome. It is found in the cytoplasm. The protein localises to the cytoskeleton. Its subcellular location is the spindle. Functionally, involved in DNA damage response (DDR) mediated through its interaction with phosphorylated H2A proteins hta1 and hta2 which mark the discrete foci of DNA damage. The chain is DNA damage response protein Mdb1 from Schizosaccharomyces pombe (strain 972 / ATCC 24843) (Fission yeast).